Consider the following 589-residue polypeptide: Aspartate--tRNA ligase (589 aa).

Glu-174 is an L-aspartate binding site. The segment at Gln-198–Lys-201 is aspartate. Arg-220 lines the L-aspartate pocket. Residues Arg-220–Glu-222 and Gln-229 each bind ATP. Residue His-448 coordinates L-aspartate. ATP is bound at residue Glu-484. An L-aspartate-binding site is contributed by Arg-491. Gly-536 to Arg-539 contributes to the ATP binding site.

This sequence belongs to the class-II aminoacyl-tRNA synthetase family. Type 1 subfamily. As to quaternary structure, homodimer.

It is found in the cytoplasm. It catalyses the reaction tRNA(Asp) + L-aspartate + ATP = L-aspartyl-tRNA(Asp) + AMP + diphosphate. Its function is as follows. Catalyzes the attachment of L-aspartate to tRNA(Asp) in a two-step reaction: L-aspartate is first activated by ATP to form Asp-AMP and then transferred to the acceptor end of tRNA(Asp). The chain is Aspartate--tRNA ligase from Leuconostoc citreum (strain KM20).